A 939-amino-acid chain; its full sequence is Progesterone receptor (939 aa).

The span at 1–11 (MTERTGKDARA) shows a compositional bias: basic and acidic residues. The AF3; mediates transcriptional activation (in isoform B) stretch occupies residues 1 to 174 (MTERTGKDAR…RSSQGAACPL (174 aa)). The segment at 1–302 (MTERTGKDAR…AEQDAPAPGC (302 aa)) is disordered. The segment at 1–572 (MTERTGKDAR…YSFESLPQKI (572 aa)) is modulating, Ala/Pro-rich. Residue Lys-7 forms a Glycyl lysine isopeptide (Lys-Gly) (interchain with G-Cter in SUMO) linkage. Over residues 15–26 (AGGAPSPAPAAE) the composition is skewed to low complexity. Ser-20 carries the phosphoserine modification. Positions 27 to 36 (PESRRRDGGR) are enriched in basic and acidic residues. Residues 49–67 (AAAAAAAAAAASAAPSAPS) are compositionally biased toward low complexity. At Ser-141 the chain carries Phosphoserine. The tract at residues 175–314 (MSRPEGKAGD…LATTMMDFIH (140 aa)) is mediates transcriptional transrepression (in isoform A). The Nuclear localization signal motif lies at 193–197 (KGPPR). Ser-200 carries the post-translational modification Phosphoserine. Low complexity-rich tracts occupy residues 211 to 230 (GAHA…AALG) and 257 to 278 (PAAA…TAPV). Ser-303 is subject to Phosphoserine; by MAPK1. The residue at position 349 (Ser-349) is a Phosphoserine; by MAPK. Lys-392 participates in a covalent cross-link: Glycyl lysine isopeptide (Lys-Gly) (interchain with G-Cter in SUMO); alternate. Lys-392 participates in a covalent cross-link: Glycyl lysine isopeptide (Lys-Gly) (interchain with G-Cter in ubiquitin); alternate. At Ser-404 the chain carries Phosphoserine; by CDK2. Residues 463–552 (PALECVLYKA…VYQPYLNYLR (90 aa)) are AF1; mediates transcriptional activation. Residue Lys-537 forms a Glycyl lysine isopeptide (Lys-Gly) (interchain with G-Cter in SUMO) linkage. NR C4-type zinc fingers lie at residues 573–593 (CLIC…CGSC) and 609–633 (CAGR…LRKC). The segment at residues 573-645 (CLICGDEASG…AGMVLGGRKF (73 aa)) is a DNA-binding region (nuclear receptor). A Phosphoserine modification is found at Ser-682. The NR LBD domain maps to 685-919 (QDIQLIPPLI…EFPEMMSEVI (235 aa)). The interval 693 to 939 (LINLLMSIEP…MVKPLLFHKK (247 aa)) is AF2; mediates transcriptional activation.

It belongs to the nuclear hormone receptor family. NR3 subfamily. In terms of assembly, interacts with SMARD1 and UNC45A. Interacts with CUEDC2; the interaction promotes ubiquitination, decreases sumoylation, and represses transcriptional activity. Interacts with PIAS3; the interaction promotes sumoylation of PR in a hormone-dependent manner, inhibits DNA-binding, and alters nuclear export. Interacts with SP1; the interaction requires ligand-induced phosphorylation on Ser-349 by ERK1/2-MAPK. Interacts with PRMT2. Isoform A interacts with NCOR2. Isoform B (but not isoform A) interacts with NCOA2 and NCOA1. Isoform B (but not isoform A) interacts with KLF9. Interacts with GTF2B. In terms of processing, phosphorylated on multiple serine sites. Several of these sites are hormone-dependent. Phosphorylation on Ser-303 occurs preferentially on isoform B, is highly hormone-dependent and modulates ubiquitination and sumoylation on Lys-392. Phosphorylation on Ser-303 and Ser-349 also requires induction by hormone. Basal phosphorylation on Ser-200 and Ser-404 is increased in response to progesterone and can be phosphorylated in vitro by the CDK2-A1 complex. Increased levels of phosphorylation on Ser-404 also in the presence of EGF, heregulin, IGF, PMA and FBS. Phosphorylation at this site by CDK2 is ligand-independent, and increases nuclear translocation and transcriptional activity. Phosphorylation at Ser-303, but not at Ser-200, is impaired during the G(2)/M phase of the cell cycle. Phosphorylation on Ser-349 by ERK1/2 MAPK is required for interaction with SP1. Post-translationally, sumoylation is hormone-dependent and represses transcriptional activity. Sumoylation on all three sites is enhanced by PIAS3. Desumoylated by SENP1. Sumoylation on Lys-392, the main site of sumoylation, is repressed by ubiquitination on the same site, and modulated by phosphorylation at Ser-303. Ubiquitination is hormone-dependent and represses sumoylation on the same site. Promoted by MAPK-mediated phosphorylation on Ser-303. In terms of processing, palmitoylated by ZDHHC7 and ZDHHC21. Palmitoylation is required for plasma membrane targeting and for rapid intracellular signaling via ERK and AKT kinases and cAMP generation. As to expression, expressed in mammary gland and uterus.

The protein localises to the nucleus. Its subcellular location is the cytoplasm. Its function is as follows. The steroid hormones and their receptors are involved in the regulation of eukaryotic gene expression and affect cellular proliferation and differentiation in target tissues. Depending on the isoform, progesterone receptor functions as a transcriptional activator or repressor. Ligand-dependent transdominant repressor of steroid hormone receptor transcriptional activity including repression of its isoform B, MR and ER. Transrepressional activity may involve recruitment of corepressor NCOR2. Functionally, transcriptional activator of several progesteron-dependent promoters in a variety of cell types. Involved in activation of SRC-dependent MAPK signaling on hormone stimulation. This is Progesterone receptor (PGR) from Canis lupus familiaris (Dog).